The primary structure comprises 571 residues: Proline--tRNA ligase (571 aa).

Belongs to the class-II aminoacyl-tRNA synthetase family. ProS type 1 subfamily. As to quaternary structure, homodimer.

The protein resides in the cytoplasm. It carries out the reaction tRNA(Pro) + L-proline + ATP = L-prolyl-tRNA(Pro) + AMP + diphosphate. In terms of biological role, catalyzes the attachment of proline to tRNA(Pro) in a two-step reaction: proline is first activated by ATP to form Pro-AMP and then transferred to the acceptor end of tRNA(Pro). As ProRS can inadvertently accommodate and process non-cognate amino acids such as alanine and cysteine, to avoid such errors it has two additional distinct editing activities against alanine. One activity is designated as 'pretransfer' editing and involves the tRNA(Pro)-independent hydrolysis of activated Ala-AMP. The other activity is designated 'posttransfer' editing and involves deacylation of mischarged Ala-tRNA(Pro). The misacylated Cys-tRNA(Pro) is not edited by ProRS. This chain is Proline--tRNA ligase, found in Pasteurella multocida (strain Pm70).